The following is a 178-amino-acid chain: Negative modulator of initiation of replication (178 aa).

The segment at 113-117 (RTRVY) is interaction with DNA.

This sequence belongs to the SeqA family. Homodimer. Polymerizes to form helical filaments.

It localises to the cytoplasm. Negative regulator of replication initiation, which contributes to regulation of DNA replication and ensures that replication initiation occurs exactly once per chromosome per cell cycle. Binds to pairs of hemimethylated GATC sequences in the oriC region, thus preventing assembly of replication proteins and re-initiation at newly replicated origins. Repression is relieved when the region becomes fully methylated. This chain is Negative modulator of initiation of replication, found in Photobacterium profundum (strain SS9).